Reading from the N-terminus, the 328-residue chain is UDP-glucose 4-epimerase (328 aa).

Residue Thr-119 participates in substrate binding. The active-site Proton acceptor is the Tyr-143.

It belongs to the NAD(P)-dependent epimerase/dehydratase family. The cofactor is NAD(+).

It carries out the reaction UDP-alpha-D-glucose = UDP-alpha-D-galactose. It functions in the pathway carbohydrate metabolism; galactose metabolism. The protein operates within glycan metabolism; exopolysaccharide biosynthesis. The polypeptide is UDP-glucose 4-epimerase (exoB) (Rhizobium meliloti (strain 1021) (Ensifer meliloti)).